The chain runs to 438 residues: SPbeta prophage-derived uncharacterized protein YopA (438 aa).

A helical transmembrane segment spans residues 391-411 (LHVLYLGVWYLELLTLGILGY).

Its subcellular location is the cell membrane. This is SPbeta prophage-derived uncharacterized protein YopA (yopA) from Bacillus subtilis (strain 168).